We begin with the raw amino-acid sequence, 920 residues long: Isoleucine--tRNA ligase (920 aa).

The short motif at 58 to 68 is the 'HIGH' region element; sequence PYANGHLHLGH. Glu569 provides a ligand contact to L-isoleucyl-5'-AMP. A 'KMSKS' region motif is present at residues 610–614; sequence KMSKS. Residue Lys613 participates in ATP binding. The Zn(2+) site is built by Cys895, Cys898, Cys910, and Cys913.

Belongs to the class-I aminoacyl-tRNA synthetase family. IleS type 1 subfamily. As to quaternary structure, monomer. It depends on Zn(2+) as a cofactor.

Its subcellular location is the cytoplasm. It carries out the reaction tRNA(Ile) + L-isoleucine + ATP = L-isoleucyl-tRNA(Ile) + AMP + diphosphate. Its function is as follows. Catalyzes the attachment of isoleucine to tRNA(Ile). As IleRS can inadvertently accommodate and process structurally similar amino acids such as valine, to avoid such errors it has two additional distinct tRNA(Ile)-dependent editing activities. One activity is designated as 'pretransfer' editing and involves the hydrolysis of activated Val-AMP. The other activity is designated 'posttransfer' editing and involves deacylation of mischarged Val-tRNA(Ile). The chain is Isoleucine--tRNA ligase from Helicobacter pylori (strain J99 / ATCC 700824) (Campylobacter pylori J99).